Here is a 79-residue protein sequence, read N- to C-terminus: Dicentracin (79 aa).

The first 22 residues, methionine 1–alanine 22, serve as a signal peptide directing secretion. Residue glycine 44 is modified to Glycine amide. The propeptide occupies alanine 47–aspartate 79. Residues glutamine 48–glutamine 67 form a disordered region.

It belongs to the pleurocidin family.

It is found in the secreted. The polypeptide is Dicentracin (Dicentrarchus labrax (European seabass)).